The chain runs to 617 residues: Protein fem-1 homolog C (617 aa).

Residue Met1 is modified to N-acetylmethionine. 7 ANK repeats span residues 2-31 (DLKTAVFNAARDGKLRLLTKLLASKSKEEV), 40-70 (NGATPLLMAARYGHLDMVEFLLEQCSASIEV), 82-111 (EGAPPLWAASAAGHLKVVQSLLNHGASVNN), 115-144 (TNSTPLRAACFDGHLEIVKYLVEHKADLEV), 148-177 (HGHTCLMISCYKGHKEIAQYLLEKGADVNR), 181-210 (KGNTALHDCAESGSLDIMKMLLMYCAKMEK), and 213-242 (YGMTPLLSASVTGHTNIVDFLTHHAQTSKT). TPR repeat units lie at residues 245-279 (INALELLGATFVDKKRDLLGALKYWKKAMNMRYSD) and 338-371 (SYYIRYRGAVYADSGNFKRCINLWKYALDMQQSN). ANK repeat units lie at residues 481-523 (NNFS…DVNV) and 527-556 (DDNSPLHIAALNNHPDIMNLLIKSGAHFDA).

This sequence belongs to the fem-1 family. In terms of assembly, component of a Cul2-RING (CRL2) E3 ubiquitin-protein ligase complex, also named ECS (Elongin BC-CUL2/5-SOCS-box protein) complex, composed of CUL2, Elongin BC (ELOB and ELOC), RBX1 and substrate-specific adapter FEM1C. As to expression, widely expressed. Highly expressed in kidney, cardiac tissue, skeletal muscle and testis. Expressed at lower levels in other tissues, including cartilage.

The protein operates within protein modification; protein ubiquitination. In terms of biological role, substrate-recognition component of a Cul2-RING (CRL2) E3 ubiquitin-protein ligase complex of the DesCEND (destruction via C-end degrons) pathway, which recognizes a C-degron located at the extreme C terminus of target proteins, leading to their ubiquitination and degradation. The C-degron recognized by the DesCEND pathway is usually a motif of less than ten residues and can be present in full-length proteins, truncated proteins or proteolytically cleaved forms. The CRL2(FEM1C) complex specifically recognizes proteins with an arginine at the C-terminus: recognizes and binds proteins ending with -Lys/Arg-Xaa-Arg and -Lys/Arg-Xaa-Xaa-Arg C-degrons, such as SIL1 or OR51B2, leading to their ubiquitination and degradation. The CRL2(FEM1C) complex mediates ubiquitination and degradation of truncated MSRB1/SEPX1 selenoproteins produced by failed UGA/Sec decoding. Promotes ubiquitination and degradation of SLBP. The polypeptide is Protein fem-1 homolog C (Homo sapiens (Human)).